The chain runs to 681 residues: Oligopeptidase A (681 aa).

A Zn(2+)-binding site is contributed by H470. E471 is an active-site residue. Zn(2+)-binding residues include H474 and H477.

Belongs to the peptidase M3 family. It depends on Zn(2+) as a cofactor.

It catalyses the reaction Hydrolysis of oligopeptides, with broad specificity. Gly or Ala commonly occur as P1 or P1' residues, but more distant residues are also important, as is shown by the fact that Z-Gly-Pro-Gly-|-Gly-Pro-Ala is cleaved, but not Z-(Gly)(5).. Its function is as follows. May play a specific role in the degradation of signal peptides after they are released from precursor forms of secreted proteins. Can cleave N-acetyl-L-Ala(4). This chain is Oligopeptidase A (prlC), found in Haemophilus influenzae (strain ATCC 51907 / DSM 11121 / KW20 / Rd).